A 346-amino-acid chain; its full sequence is Heat-inducible transcription repressor HrcA (346 aa).

The protein belongs to the HrcA family.

Its function is as follows. Negative regulator of class I heat shock genes (grpE-dnaK-dnaJ and groELS operons). Prevents heat-shock induction of these operons. This chain is Heat-inducible transcription repressor HrcA, found in Fructilactobacillus sanfranciscensis (Lactobacillus sanfranciscensis).